We begin with the raw amino-acid sequence, 269 residues long: Phosphate import ATP-binding protein PstB 2 (269 aa).

In terms of domain architecture, ABC transporter spans 22 to 264; that stretch reads LSTNDLRVFY…PSLQSTEDYV (243 aa). 55-62 lines the ATP pocket; it reads GPSGSGKS.

This sequence belongs to the ABC transporter superfamily. Phosphate importer (TC 3.A.1.7) family. The complex is composed of two ATP-binding proteins (PstB), two transmembrane proteins (PstC and PstA) and a solute-binding protein (PstS).

The protein resides in the cell membrane. The enzyme catalyses phosphate(out) + ATP + H2O = ADP + 2 phosphate(in) + H(+). In terms of biological role, part of the ABC transporter complex PstSACB involved in phosphate import. Responsible for energy coupling to the transport system. This is Phosphate import ATP-binding protein PstB 2 from Lactococcus lactis subsp. lactis (strain IL1403) (Streptococcus lactis).